Here is a 491-residue protein sequence, read N- to C-terminus: 23S rRNA (uracil(1939)-C(5))-methyltransferase RlmD (491 aa).

Positions 1-10 (MSDPTEHPEI) are enriched in basic and acidic residues. The interval 1-28 (MSDPTEHPEILQDPSSSAPVQGRTDLPP) is disordered. One can recognise a TRAM domain in the interval 18–81 (APVQGRTDLP…NNWEQASLTA (64 aa)). [4Fe-4S] cluster is bound by residues cysteine 94, cysteine 104, cysteine 107, and cysteine 186. 6 residues coordinate S-adenosyl-L-methionine: glutamine 294, phenylalanine 323, asparagine 328, glutamate 344, asparagine 379, and aspartate 400. Cysteine 447 serves as the catalytic Nucleophile.

It belongs to the class I-like SAM-binding methyltransferase superfamily. RNA M5U methyltransferase family. RlmD subfamily.

The catalysed reaction is uridine(1939) in 23S rRNA + S-adenosyl-L-methionine = 5-methyluridine(1939) in 23S rRNA + S-adenosyl-L-homocysteine + H(+). In terms of biological role, catalyzes the formation of 5-methyl-uridine at position 1939 (m5U1939) in 23S rRNA. This chain is 23S rRNA (uracil(1939)-C(5))-methyltransferase RlmD, found in Paracidovorax citrulli (strain AAC00-1) (Acidovorax citrulli).